The following is a 332-amino-acid chain: 1-acyl-sn-glycerol-3-phosphate acyltransferase CHLREDRAFT_174358 (332 aa).

Residues 96 to 116 (FLLSLPLFVTMMVMAPLVLAF) form a helical membrane-spanning segment. Positions 163 to 168 (HQSFLD) match the HXXXXD motif motif. Residues 185-205 (TSNFLIPIIGWSMFLTGHVMI) traverse the membrane as a helical segment. An EGTR motif motif is present at residues 235–238 (EGTR).

Belongs to the 1-acyl-sn-glycerol-3-phosphate acyltransferase family.

Its subcellular location is the membrane. The catalysed reaction is a 1-acyl-sn-glycero-3-phosphate + an acyl-CoA = a 1,2-diacyl-sn-glycero-3-phosphate + CoA. Its pathway is phospholipid metabolism; CDP-diacylglycerol biosynthesis; CDP-diacylglycerol from sn-glycerol 3-phosphate: step 2/3. Converts lysophosphatidic acid (LPA) into phosphatidic acid by incorporating an acyl moiety at the sn-2 position of the glycerol backbone. This Chlamydomonas reinhardtii (Chlamydomonas smithii) protein is 1-acyl-sn-glycerol-3-phosphate acyltransferase CHLREDRAFT_174358.